A 645-amino-acid polypeptide reads, in one-letter code: Threonine--tRNA ligase (645 aa).

The region spanning Met1–Thr63 is the TGS domain. Residues Asp242 to Pro540 are catalytic. The Zn(2+) site is built by Cys336, His387, and His517.

It belongs to the class-II aminoacyl-tRNA synthetase family. In terms of assembly, homodimer. Zn(2+) is required as a cofactor.

The protein resides in the cytoplasm. It carries out the reaction tRNA(Thr) + L-threonine + ATP = L-threonyl-tRNA(Thr) + AMP + diphosphate + H(+). Functionally, catalyzes the attachment of threonine to tRNA(Thr) in a two-step reaction: L-threonine is first activated by ATP to form Thr-AMP and then transferred to the acceptor end of tRNA(Thr). Also edits incorrectly charged L-seryl-tRNA(Thr). The chain is Threonine--tRNA ligase from Staphylococcus epidermidis (strain ATCC 35984 / DSM 28319 / BCRC 17069 / CCUG 31568 / BM 3577 / RP62A).